A 392-amino-acid chain; its full sequence is Protein trapped in endoderm-1 (392 aa).

Residues 1-39 (MDQDMGMATGYFQDADMQMDEPAAATQSIYPHSATLFAA) are Extracellular-facing. A helical membrane pass occupies residues 40 to 60 (ISACVFVTIGVLGNLITLLAL). Over 61-73 (LKSPTIREHATTA) the chain is Cytoplasmic. Residues 74-94 (FVISLSISDLLFCSFSLPLTA) traverse the membrane as a helical segment. Residues 95 to 110 (VRFFQESWTFGTTLCK) are Extracellular-facing. The chain crosses the membrane as a helical span at residues 111–131 (IFPVIFYGNVAVSLLSMVGIT). Over 132-156 (LNRYILIACHSRYSQIYKPKFITLQ) the chain is Cytoplasmic. A helical transmembrane segment spans residues 157 to 177 (LLFVWAVSFLLLLPPILGIWG). The Extracellular portion of the chain corresponds to 178–202 (EMGLDEATFSCTILKKEGRSIKKTL). Residues 203-223 (FVIGFLLPCLVIIVSYSCIYI) form a helical membrane-spanning segment. Topologically, residues 224–268 (TVLHQKKKIRNHDNFQIAAAKGSSSSGGGSYMTTTCTRKAREDNR) are cytoplasmic. The chain crosses the membrane as a helical span at residues 269–289 (LTVMMVTIFLCFLVCFLPLML). The Extracellular segment spans residues 290-302 (ANVVDDERNTSYP). N-linked (GlcNAc...) asparagine glycosylation occurs at Asn298. Residues 303 to 323 (WLHIIASVMAWASSVINPIIY) traverse the membrane as a helical segment. Over 324-392 (AASNRNYRVA…INQMCQTYSV (69 aa)) the chain is Cytoplasmic. Residues Ser359, Ser362, and Ser366 each carry the phosphoserine modification. Residue Thr372 is modified to Phosphothreonine.

It belongs to the G-protein coupled receptor 1 family. In embryos, expression is seen at highest levels in the cuprophilic cells and at lower levels in the amnioserosa, developing CNS, cardiac mesoderm primordium and midline glia.

It is found in the cell membrane. Essential for the first active step of germ cell migration: transepithelial migration of germ cells through the posterior midgut (PMG) epithelium. This Drosophila melanogaster (Fruit fly) protein is Protein trapped in endoderm-1 (Tre1).